A 426-amino-acid chain; its full sequence is 3-phosphoshikimate 1-carboxyvinyltransferase (426 aa).

Residues Lys-22, Ser-23, and Arg-27 each coordinate 3-phosphoshikimate. Lys-22 contributes to the phosphoenolpyruvate binding site. 2 residues coordinate phosphoenolpyruvate: Gly-96 and Arg-124. Residues Ser-170, Ser-171, Gln-172, Ser-198, Asp-314, Asn-337, and Lys-341 each coordinate 3-phosphoshikimate. Gln-172 serves as a coordination point for phosphoenolpyruvate. Residue Asp-314 is the Proton acceptor of the active site. Arg-345, Arg-387, and Lys-412 together coordinate phosphoenolpyruvate.

Belongs to the EPSP synthase family. Monomer.

It is found in the cytoplasm. It carries out the reaction 3-phosphoshikimate + phosphoenolpyruvate = 5-O-(1-carboxyvinyl)-3-phosphoshikimate + phosphate. Its pathway is metabolic intermediate biosynthesis; chorismate biosynthesis; chorismate from D-erythrose 4-phosphate and phosphoenolpyruvate: step 6/7. Catalyzes the transfer of the enolpyruvyl moiety of phosphoenolpyruvate (PEP) to the 5-hydroxyl of shikimate-3-phosphate (S3P) to produce enolpyruvyl shikimate-3-phosphate and inorganic phosphate. The sequence is that of 3-phosphoshikimate 1-carboxyvinyltransferase from Shewanella sp. (strain ANA-3).